A 202-amino-acid chain; its full sequence is Glycerol-3-phosphate acyltransferase (202 aa).

The next 6 helical transmembrane spans lie at 2-22 (MIIVMLLLSYLIGAFPSGFVI), 54-74 (FLVTFLDIFKGFITVFFPLWL), 85-105 (FFTNGLIVGLFAILGHVYPVY), 120-140 (VVLGVNPILLLILAIIFFIVL), 141-161 (KIFKYVSLASIVAAICCVIGS), and 162-182 (LIIQDYILLVVSFLVSIILII).

It belongs to the PlsY family. Probably interacts with PlsX.

The protein resides in the cell membrane. It carries out the reaction an acyl phosphate + sn-glycerol 3-phosphate = a 1-acyl-sn-glycero-3-phosphate + phosphate. The protein operates within lipid metabolism; phospholipid metabolism. Functionally, catalyzes the transfer of an acyl group from acyl-phosphate (acyl-PO(4)) to glycerol-3-phosphate (G3P) to form lysophosphatidic acid (LPA). This enzyme utilizes acyl-phosphate as fatty acyl donor, but not acyl-CoA or acyl-ACP. The chain is Glycerol-3-phosphate acyltransferase from Staphylococcus aureus (strain Mu3 / ATCC 700698).